Here is a 185-residue protein sequence, read N- to C-terminus: Elongation factor P (185 aa).

This sequence belongs to the elongation factor P family.

Its subcellular location is the cytoplasm. The protein operates within protein biosynthesis; polypeptide chain elongation. Its function is as follows. Involved in peptide bond synthesis. Stimulates efficient translation and peptide-bond synthesis on native or reconstituted 70S ribosomes in vitro. Probably functions indirectly by altering the affinity of the ribosome for aminoacyl-tRNA, thus increasing their reactivity as acceptors for peptidyl transferase. This Syntrophomonas wolfei subsp. wolfei (strain DSM 2245B / Goettingen) protein is Elongation factor P.